The following is a 406-amino-acid chain: Argininosuccinate synthase (406 aa).

ATP contacts are provided by residues 13 to 21 (AYSGGLDTS) and Ala-40. Positions 91 and 96 each coordinate L-citrulline. Gly-121 contributes to the ATP binding site. L-aspartate-binding residues include Thr-123, Asn-127, and Asp-128. L-citrulline is bound at residue Asn-127. 5 residues coordinate L-citrulline: Arg-131, Ser-182, Ser-191, Glu-267, and Tyr-279.

Belongs to the argininosuccinate synthase family. Type 1 subfamily. Homotetramer.

It localises to the cytoplasm. It catalyses the reaction L-citrulline + L-aspartate + ATP = 2-(N(omega)-L-arginino)succinate + AMP + diphosphate + H(+). Its pathway is amino-acid biosynthesis; L-arginine biosynthesis; L-arginine from L-ornithine and carbamoyl phosphate: step 2/3. This is Argininosuccinate synthase from Brucella anthropi (strain ATCC 49188 / DSM 6882 / CCUG 24695 / JCM 21032 / LMG 3331 / NBRC 15819 / NCTC 12168 / Alc 37) (Ochrobactrum anthropi).